The sequence spans 955 residues: Histone deacetylase 6 (955 aa).

Histone deacetylase regions lie at residues Thr-15–Phe-337 and Met-425–Asn-749. His-146 serves as the catalytic 1. His-561 (2) is an active-site residue. Positions Ser-815 to Ile-840 are disordered. A compositionally biased stretch (low complexity) spans Met-818–Ser-831. The UBP-type zinc finger occupies Ala-853–Glu-951. Residues Cys-855, His-857, Cys-875, Cys-878, Cys-887, Cys-890, and Cys-895 each coordinate Zn(2+). Residues Gly-896–Phe-898 form a ubiquitin binding region. The Zn(2+) site is built by His-902, His-906, His-912, Cys-925, and Cys-928. Residues Trp-924–Tyr-931 form a ubiquitin binding region.

The protein belongs to the histone deacetylase family. HD type 2 subfamily. The cofactor is Zn(2+).

It is found in the nucleus. The enzyme catalyses N(6)-acetyl-L-lysyl-[histone] + H2O = L-lysyl-[histone] + acetate. In terms of biological role, probable histone deacetylase. Histone deacetylases are responsible for the deacetylation of lysine residues on the N-terminal part of the core histones (H2A, H2B, H3 and H4). Histone deacetylation gives a tag for epigenetic repression and plays an important role in transcriptional regulation, cell cycle progression and developmental events. Histone deacetylases act via the formation of large multiprotein complexes. The polypeptide is Histone deacetylase 6 (hda-6) (Caenorhabditis elegans).